The chain runs to 486 residues: Aromatic-L-amino-acid decarboxylase (486 aa).

Residue methionine 1 is modified to N-acetylmethionine. Repeat copies occupy residues 58–115 and 118–178. The segment at 58 to 178 is 2 X approximate tandem repeats; that stretch reads QDVEKIIMPG…AASPGLTQGA (121 aa). Residue threonine 82 coordinates substrate. Residues alanine 148 and serine 149 each contribute to the pyridoxal 5'-phosphate site. Histidine 192 contributes to the substrate binding site. Threonine 246 and asparagine 300 together coordinate pyridoxal 5'-phosphate. Lysine 303 carries the N6-(pyridoxal phosphate)lysine modification.

It belongs to the group II decarboxylase family. Homodimer. Pyridoxal 5'-phosphate serves as cofactor.

The catalysed reaction is L-dopa + H(+) = dopamine + CO2. It carries out the reaction 5-hydroxy-L-tryptophan + H(+) = serotonin + CO2. It functions in the pathway catecholamine biosynthesis; dopamine biosynthesis; dopamine from L-tyrosine: step 2/2. In terms of biological role, catalyzes the decarboxylation of L-3,4-dihydroxyphenylalanine (DOPA) to dopamine and L-5-hydroxytryptophan to serotonin. The protein is Aromatic-L-amino-acid decarboxylase (DDC) of Sus scrofa (Pig).